A 331-amino-acid chain; its full sequence is DNA double-strand break repair nuclease NurA (331 aa).

Mn(2+)-binding residues include Asp56 and Asp131.

Belongs to the NurA family. Homodimer. Interacts with SSB. Mn(2+) is required as a cofactor.

The 5'-3' ssDNA and dsDNA exonuclease and ssDNA endonuclease activities are inhibited by SSB (single-stranded DNA-binding protein). Involved in DNA double-strand break (DSB) repair. Probably acts with HerA to stimulate resection of the 5' strand and produce the long 3' single-strand that is required for RadA loading. Exhibits both single-stranded endonuclease activity and 5'-3' exonuclease activity on single-stranded and double-stranded DNA. This is DNA double-strand break repair nuclease NurA from Sulfurisphaera tokodaii (strain DSM 16993 / JCM 10545 / NBRC 100140 / 7) (Sulfolobus tokodaii).